We begin with the raw amino-acid sequence, 789 residues long: Tax1-binding protein 1 (789 aa).

Phosphoserine is present on residues serine 124, serine 138, and serine 225. Positions 144 to 599 form a coiled coil; it reads TTKAGLLELK…LKRSLENPAE (456 aa). The interval 320-420 is oligomerization; sequence EEIGRLQLCL…ELKLNAMKKD (101 aa). Over residues 481 to 502 the composition is skewed to polar residues; sequence TGNQQKVNDASVNTDPATSAST. Residues 481 to 508 form a disordered region; the sequence is TGNQQKVNDASVNTDPATSASTVDVKPS. Serine 593 is modified (phosphoserine; by IKKA). Position 609 is a phosphoserine (serine 609). A disordered region spans residues 639 to 660; the sequence is YASQETRDGADGAFYPDEIQRP. Serine 666 carries the phosphoserine; by IKKA modification. Residues 678 to 712 form a disordered region; that stretch reads PARNFSRPDGLEDSEDSKEDENVPTAPDPPSQHLR. 2 consecutive UBZ1-type zinc fingers follow at residues 727–753 and 754–780; these read HKKCPLCELMFPPNYDQSKFEEHVESH and WKVCPMCSEQFPPDYDQQVFERHVQTH. Positions 730, 733, 749, 753, 757, 760, 776, and 780 each coordinate Zn(2+).

As to quaternary structure, homooligomer. Interacts with TNFAIP3. Interacts with STARD13. Interacts with MYO6. Interacts with TOM1; the interaction is indirect and is mediated by MYO6, which acts as a bridge between TOM1 and TAX1BP1. Interacts with MAVS; this interaction induces MAVS polyubiquitination. Interacts with TNIP1. Interacts with TRAF6; this interaction mediates deubiquitination of TRAF6 and inhibition of NF-kappa-B activation. Interacts with RIPK1; this interaction negatively regulates RIPK1 ubiquitination. Interacts with NBR1. Interacts with TBK1. Interacts with RB1CC1. Interacts with SQSTM1. Interacts with AZI2. Interacts with TICAM1 and TRIM32; these interactions target TICAM1 to TAX1BP1-mediated selective autophagic degradation. (Microbial infection) Interacts with the HTLV-1 protein Tax. In terms of assembly, (Microbial infection) Interacts with Respiratory syncytial virus protein N; this interaction may promote viral growth by inhibiting the innate immune response. As to quaternary structure, (Microbial infection) Interacts with Lassa virus protein Z. (Microbial infection) Interacts with Mopeia virus protein Z. Post-translationally, phosphorylated in the C-terminal region by CHUK/IKKA leading to NF-kappa-B signaling down-regulation. As to expression, expressed in all tissues tested.

It localises to the cytoplasm. Its subcellular location is the mitochondrion. It is found in the preautophagosomal structure. The protein localises to the cytoplasmic vesicle. The protein resides in the autophagosome. Ubiquitin-binding adapter that participates in inflammatory, antiviral and innate immune processes as well as selective autophagy regulation. Plays a key role in the negative regulation of NF-kappa-B and IRF3 signalings by acting as an adapter for the ubiquitin-editing enzyme A20/TNFAIP3 to bind and inactivate its substrates. Disrupts the interactions between the E3 ubiquitin ligase TRAF3 and TBK1/IKBKE to attenuate 'Lys63'-linked polyubiquitination of TBK1 and thereby IFN-beta production. Also recruits A20/TNFAIP3 to ubiquitinated signaling proteins TRAF6 and RIPK1, leading to their deubiquitination and disruption of IL-1 and TNF-induced NF-kappa-B signaling pathways. Inhibits virus-induced apoptosis by inducing the 'Lys-48'-linked polyubiquitination and degradation of MAVS via recruitment of the E3 ligase ITCH, thereby attenuating MAVS-mediated apoptosis signaling. As a macroautophagy/autophagy receptor, facilitates the xenophagic clearance of pathogenic bacteria such as Salmonella typhimurium and Mycobacterium tuberculosis. Upon NBR1 recruitment to the SQSTM1-ubiquitin condensates, acts as the major recruiter of RB1CC1 to these ubiquitin condensates to promote their autophagic degradation. Mediates the autophagic degradation of other substrates including TICAM1. The sequence is that of Tax1-binding protein 1 (TAX1BP1) from Homo sapiens (Human).